Consider the following 474-residue polypeptide: Probable dipeptidase B (474 aa).

Cysteine 11 is an active-site residue.

It belongs to the peptidase C69 family.

It catalyses the reaction an L-aminoacyl-L-amino acid + H2O = 2 an L-alpha-amino acid. This is Probable dipeptidase B (pepDB) from Lactococcus lactis subsp. lactis (strain IL1403) (Streptococcus lactis).